A 392-amino-acid polypeptide reads, in one-letter code: L-rhamnonate dehydratase (392 aa).

2 residues coordinate substrate: His-22 and Arg-48. Residues Asp-214, Glu-240, and Glu-268 each contribute to the Mg(2+) site. His-318 acts as the Proton acceptor in catalysis. Glu-338 is a binding site for substrate.

The protein belongs to the mandelate racemase/muconate lactonizing enzyme family. RhamD subfamily. As to quaternary structure, homooctamer; tetramer of dimers. The cofactor is Mg(2+).

It catalyses the reaction L-rhamnonate = 2-dehydro-3-deoxy-L-rhamnonate + H2O. Its function is as follows. Catalyzes the dehydration of L-rhamnonate to 2-keto-3-deoxy-L-rhamnonate (KDR). The protein is L-rhamnonate dehydratase of Paraburkholderia phymatum (strain DSM 17167 / CIP 108236 / LMG 21445 / STM815) (Burkholderia phymatum).